The primary structure comprises 340 residues: Phosphoribosylformylglycinamidine cyclo-ligase (340 aa).

Belongs to the AIR synthase family.

The protein resides in the cytoplasm. The enzyme catalyses 2-formamido-N(1)-(5-O-phospho-beta-D-ribosyl)acetamidine + ATP = 5-amino-1-(5-phospho-beta-D-ribosyl)imidazole + ADP + phosphate + H(+). It functions in the pathway purine metabolism; IMP biosynthesis via de novo pathway; 5-amino-1-(5-phospho-D-ribosyl)imidazole from N(2)-formyl-N(1)-(5-phospho-D-ribosyl)glycinamide: step 2/2. This Streptococcus pyogenes serotype M6 (strain ATCC BAA-946 / MGAS10394) protein is Phosphoribosylformylglycinamidine cyclo-ligase.